The chain runs to 367 residues: Nodulation protein 10 (367 aa).

11 helical membrane passes run 15–37 (FDLL…WLHL), 46–66 (VFDL…SGFL), 88–108 (IFPA…VTGG), 109–129 (LNVT…LTAA), 155–175 (VLWT…LLEI), 183–203 (GALV…HFNI), 208–228 (NPFL…GVLA), 245–265 (WWLA…AAFI), 270–290 (AAPV…SAAH), 312–332 (MLVM…LWIV), and 335–355 (VGTV…AMKL).

This sequence belongs to the acyltransferase 3 family.

Its subcellular location is the cell membrane. In terms of biological role, not known. NodX allows Rhizobium leguminosarum biovar viciae strain TOM to nodulate Afghanistan peas. This chain is Nodulation protein 10 (nodX), found in Rhizobium leguminosarum bv. viciae.